Here is a 528-residue protein sequence, read N- to C-terminus: Inorganic phosphate transporter 1-2 (528 aa).

Topologically, residues 1-24 (MAGSQLNVLVKLDQAKTQWYHFMA) are cytoplasmic. Residues 25–45 (IVIAGMGFFTDAYDLFCIALV) form a helical membrane-spanning segment. Residues 46 to 71 (TKLLGRLYYTDITKPNPGTLPPNVSS) are Extracellular-facing. Residues 72–92 (AVTGVALCGTLAGQLFFGWLG) traverse the membrane as a helical segment. Over 93-99 (DKLGRKS) the chain is Cytoplasmic. A helical transmembrane segment spans residues 100 to 120 (VYGFTLILMVVCSIASGLSFG). Topologically, residues 121-125 (HTPKS) are extracellular. Residues 126 to 146 (VIATLCFFRFWLGFGIGGDYP) form a helical membrane-spanning segment. Residues 147 to 163 (LSATIMSEYASKKTRGA) lie on the Cytoplasmic side of the membrane. Residues 164–184 (FIAAVFAMQGFGILFGAIVAL) traverse the membrane as a helical segment. At 185-212 (VVSAGFRHAYPAPSYAQNPAASLAPQAD) the chain is on the extracellular side. A helical membrane pass occupies residues 213–232 (YTWRLILMFGTIPAGLTYYW). Over 233-296 (RMKMPETARY…RQFMKRHGMH (64 aa)) the chain is Cytoplasmic. The helical transmembrane segment at 297-317 (LLATTSTWFLLDIAFYSQNLF) threads the bilayer. At 318 to 348 (QKDIFSKVGWIPPAKTMNALEELYRISRAQA) the chain is on the extracellular side. The helical transmembrane segment at 349–369 (LIALCGTIPGYWFTVAFIDIV) threads the bilayer. Over 370-371 (GR) the chain is Cytoplasmic. A helical transmembrane segment spans residues 372–392 (FWIQIMGFFMMTVFMLALGVP). Topologically, residues 393–405 (YDHWTHPAHHTGF) are extracellular. The chain crosses the membrane as a helical span at residues 406–426 (VVLYALTFFFANFGPNSTTFI). Over 427–442 (VPAEIFPARLRSTCHG) the chain is Cytoplasmic. A helical transmembrane segment spans residues 443 to 463 (ISAASGKAGAIIGAFGFLYAA). Topologically, residues 464-481 (QDQHNPDAGYSRGIGIRN) are extracellular. Residues 482 to 502 (ALFVLAGTNFLGMLMTLLVPE) traverse the membrane as a helical segment. Topologically, residues 503-528 (SKGLSLEEMSKDNVVDETAQEAIAQA) are cytoplasmic.

It belongs to the major facilitator superfamily. Phosphate:H(+) symporter (TC 2.A.1.9) family. As to expression, expressed in the root stele and leaf phloem and xylem.

It is found in the membrane. Its function is as follows. Low-affinity transporter for inorganic phosphate (Pi). Involved in internal Pi transport from root to shoot. Responsible for most of the PHR2-mediated accumulation of excess shoot Pi under abundant Pi conditions, but not for PHO2-mediated accumulation of excess shoot Pi. Acts as a H(+):phosphate symporter. The sequence is that of Inorganic phosphate transporter 1-2 (PTH1-2) from Oryza sativa subsp. japonica (Rice).